A 278-amino-acid chain; its full sequence is Troponin T, slow skeletal muscle (278 aa).

The segment covering 1–37 has biased composition (acidic residues); the sequence is MSDTEEQEYEEEQPEEEAAEEEEEAPEEPEPVAEPEE. Disordered regions lie at residues 1 to 63 and 105 to 153; these read MSDT…RVDF and RRRS…KKKV. Phosphoserine; by CK2 is present on Ser2. Over residues 43-55 the composition is skewed to pro residues; that stretch reads SRPVVPPLIPPKI. The span at 105-149 shows a compositional bias: basic and acidic residues; the sequence is RRRSERAEQQRFRTEKERERQAKLAEEKMRKEEEEAKKRAEDDAK.

The protein belongs to the troponin T family. As to quaternary structure, interacts with TPM3.

In terms of biological role, troponin T is the tropomyosin-binding subunit of troponin, the thin filament regulatory complex which confers calcium-sensitivity to striated muscle actomyosin ATPase activity. This chain is Troponin T, slow skeletal muscle (TNNT1), found in Homo sapiens (Human).